The following is a 635-amino-acid chain: Probable extracellular metalloproteinase 1 (635 aa).

The N-terminal stretch at 1 to 19 (MHGLLLAAGLLSLPLHVLA) is a signal peptide. A propeptide spanning residues 20 to 246 (HPQPSTSTSL…VHNVVDYVAH (227 aa)) is cleaved from the precursor. Asn-287 carries an N-linked (GlcNAc...) asparagine glycan. Residue His-430 participates in Zn(2+) binding. The active site involves Glu-431. His-434 is a Zn(2+) binding site. N-linked (GlcNAc...) asparagine glycosylation is found at Asn-475, Asn-594, and Asn-623.

The protein belongs to the peptidase M36 family. Requires Zn(2+) as cofactor.

It localises to the secreted. Functionally, secreted metalloproteinase probably acting as a virulence factor. This is Probable extracellular metalloproteinase 1 (MEP1) from Arthroderma benhamiae (strain ATCC MYA-4681 / CBS 112371) (Trichophyton mentagrophytes).